Consider the following 120-residue polypeptide: NAD(P)H-quinone oxidoreductase subunit 3, chloroplastic (120 aa).

The next 3 membrane-spanning stretches (helical) occupy residues 9 to 29, 64 to 84, and 88 to 108; these read IFWA…LISG, MFAL…PWAM, and VLGV…ILGL.

The protein belongs to the complex I subunit 3 family. NDH is composed of at least 16 different subunits, 5 of which are encoded in the nucleus.

It is found in the plastid. Its subcellular location is the chloroplast thylakoid membrane. The catalysed reaction is a plastoquinone + NADH + (n+1) H(+)(in) = a plastoquinol + NAD(+) + n H(+)(out). It carries out the reaction a plastoquinone + NADPH + (n+1) H(+)(in) = a plastoquinol + NADP(+) + n H(+)(out). Its function is as follows. NDH shuttles electrons from NAD(P)H:plastoquinone, via FMN and iron-sulfur (Fe-S) centers, to quinones in the photosynthetic chain and possibly in a chloroplast respiratory chain. The immediate electron acceptor for the enzyme in this species is believed to be plastoquinone. Couples the redox reaction to proton translocation, and thus conserves the redox energy in a proton gradient. The protein is NAD(P)H-quinone oxidoreductase subunit 3, chloroplastic of Capsella bursa-pastoris (Shepherd's purse).